A 146-amino-acid polypeptide reads, in one-letter code: Putative actin-depolymerizing factor 8 (146 aa).

The region spanning 14-144 (PAWIEVPEKS…DLEVLRGRAN (131 aa)) is the ADF-H domain.

This sequence belongs to the actin-binding proteins ADF family.

In terms of biological role, actin-depolymerizing protein. Severs actin filaments (F-actin) and binds to actin monomers. The sequence is that of Putative actin-depolymerizing factor 8 (ADF8) from Oryza sativa subsp. japonica (Rice).